Here is a 137-residue protein sequence, read N- to C-terminus: DNA-directed RNA polymerase subunit omega (137 aa).

The disordered stretch occupies residues 78–137; that stretch reads DEPEPEAVPLLSSSPAAAAVAPQAASGDDNDIQFDRMSEEDLLRGLENLAPPTETEDEGD. Low complexity predominate over residues 84 to 103; it reads AVPLLSSSPAAAAVAPQAAS. Residues 110-121 are compositionally biased toward basic and acidic residues; it reads QFDRMSEEDLLR.

Belongs to the RNA polymerase subunit omega family. As to quaternary structure, the RNAP catalytic core consists of 2 alpha, 1 beta, 1 beta' and 1 omega subunit. When a sigma factor is associated with the core the holoenzyme is formed, which can initiate transcription.

The enzyme catalyses RNA(n) + a ribonucleoside 5'-triphosphate = RNA(n+1) + diphosphate. In terms of biological role, promotes RNA polymerase assembly. Latches the N- and C-terminal regions of the beta' subunit thereby facilitating its interaction with the beta and alpha subunits. The protein is DNA-directed RNA polymerase subunit omega of Methylobacterium sp. (strain 4-46).